The chain runs to 339 residues: Heat-inducible transcription repressor HrcA (339 aa).

This sequence belongs to the HrcA family.

Negative regulator of class I heat shock genes (grpE-dnaK-dnaJ and groELS operons). Prevents heat-shock induction of these operons. This is Heat-inducible transcription repressor HrcA from Frankia casuarinae (strain DSM 45818 / CECT 9043 / HFP020203 / CcI3).